The following is a 481-amino-acid chain: Argininosuccinate lyase (481 aa).

Belongs to the lyase 1 family. Argininosuccinate lyase subfamily.

The protein localises to the cytoplasm. The enzyme catalyses 2-(N(omega)-L-arginino)succinate = fumarate + L-arginine. It functions in the pathway amino-acid biosynthesis; L-arginine biosynthesis; L-arginine from L-ornithine and carbamoyl phosphate: step 3/3. The polypeptide is Argininosuccinate lyase (Methanococcus maripaludis (strain C7 / ATCC BAA-1331)).